Reading from the N-terminus, the 950-residue chain is Translation initiation factor IF-2 (950 aa).

Disordered stretches follow at residues 69 to 92 and 128 to 352; these read KTKTVPETAKSKQEDHPRTFAGKA and KPKV…SNVP. Basic and acidic residues-rich tracts occupy residues 77-86, 128-158, 165-186, 200-234, and 291-312; these read AKSKQEDHPR, KPKVAEPVKKSEPKAAAKAEETKVEKVEAKA, AEVKTENVADKKEPVVTEEKKK, KRAEDIKKEQAAARPEKKKFDKNRNDRNNRNDNRR, and NRRDRDRKKTDSNRDNTKDGNR. 2 stretches are compositionally biased toward polar residues: residues 322 to 336 and 343 to 352; these read NRNQVRNARNSNWNQ and YQNNQSSNVP. The 172-residue stretch at 448–619 folds into the tr-type G domain; it reads ERPAVVTIMG…LLVAEVQELK (172 aa). Positions 457-464 are G1; the sequence is GHVDHGKT. Residue 457–464 participates in GTP binding; that stretch reads GHVDHGKT. The segment at 482–486 is G2; the sequence is GITQH. The interval 503-506 is G3; sequence DTPG. Residues 503–507 and 557–560 each bind GTP; these read DTPGH and NKID. Residues 557–560 are G4; it reads NKID. The tract at residues 595 to 597 is G5; sequence SAK.

Belongs to the TRAFAC class translation factor GTPase superfamily. Classic translation factor GTPase family. IF-2 subfamily.

Its subcellular location is the cytoplasm. Functionally, one of the essential components for the initiation of protein synthesis. Protects formylmethionyl-tRNA from spontaneous hydrolysis and promotes its binding to the 30S ribosomal subunits. Also involved in the hydrolysis of GTP during the formation of the 70S ribosomal complex. This is Translation initiation factor IF-2 from Lactococcus lactis subsp. cremoris (strain SK11).